We begin with the raw amino-acid sequence, 400 residues long: Acetate kinase (400 aa).

Asparagine 10 is a Mg(2+) binding site. Residue lysine 17 coordinates ATP. Arginine 91 contacts substrate. Catalysis depends on aspartate 150, which acts as the Proton donor/acceptor. Residues 210–214 (HLGNG), 285–287 (DCR), and 333–337 (GIGEN) each bind ATP. Glutamate 387 contributes to the Mg(2+) binding site.

It belongs to the acetokinase family. As to quaternary structure, homodimer. Mg(2+) is required as a cofactor. Mn(2+) serves as cofactor.

The protein localises to the cytoplasm. The catalysed reaction is acetate + ATP = acetyl phosphate + ADP. It functions in the pathway metabolic intermediate biosynthesis; acetyl-CoA biosynthesis; acetyl-CoA from acetate: step 1/2. Catalyzes the formation of acetyl phosphate from acetate and ATP. Can also catalyze the reverse reaction. This is Acetate kinase from Proteus mirabilis (strain HI4320).